A 325-amino-acid chain; its full sequence is NADH-quinone oxidoreductase subunit H (325 aa).

8 helical membrane passes run 11-31 (ILLT…CGAF), 81-101 (VIFT…FAIV), 114-134 (IGIL…LFAG), 154-174 (LSYE…AGSF), 186-206 (VWNV…GVAV), 237-257 (FFVG…TLFF), 265-285 (LPPF…FILI), and 304-324 (ICLP…LWQA).

The protein belongs to the complex I subunit 1 family. As to quaternary structure, NDH-1 is composed of 13 different subunits. Subunits NuoA, H, J, K, L, M, N constitute the membrane sector of the complex.

The protein resides in the cell inner membrane. The enzyme catalyses a quinone + NADH + 5 H(+)(in) = a quinol + NAD(+) + 4 H(+)(out). In terms of biological role, NDH-1 shuttles electrons from NADH, via FMN and iron-sulfur (Fe-S) centers, to quinones in the respiratory chain. The immediate electron acceptor for the enzyme in this species is believed to be ubiquinone. Couples the redox reaction to proton translocation (for every two electrons transferred, four hydrogen ions are translocated across the cytoplasmic membrane), and thus conserves the redox energy in a proton gradient. This subunit may bind ubiquinone. The sequence is that of NADH-quinone oxidoreductase subunit H from Escherichia fergusonii (strain ATCC 35469 / DSM 13698 / CCUG 18766 / IAM 14443 / JCM 21226 / LMG 7866 / NBRC 102419 / NCTC 12128 / CDC 0568-73).